We begin with the raw amino-acid sequence, 95 residues long: Acylphosphatase (95 aa).

Residues 7-94 enclose the Acylphosphatase-like domain; sequence AALVRITGRV…EAPAGFRITR (88 aa). Catalysis depends on residues R22 and N40. Residues 76–88 are compositionally biased toward low complexity; sequence VASEEASSAEAPA. Residues 76-95 are disordered; it reads VASEEASSAEAPAGFRITRG.

It belongs to the acylphosphatase family.

It catalyses the reaction an acyl phosphate + H2O = a carboxylate + phosphate + H(+). The chain is Acylphosphatase (acyP) from Rhizobium meliloti (strain 1021) (Ensifer meliloti).